A 99-amino-acid polypeptide reads, in one-letter code: DNA-directed RNA polymerase subunit omega (99 aa).

It belongs to the RNA polymerase subunit omega family. In terms of assembly, the RNAP catalytic core consists of 2 alpha, 1 beta, 1 beta' and 1 omega subunit. When a sigma factor is associated with the core the holoenzyme is formed, which can initiate transcription.

The enzyme catalyses RNA(n) + a ribonucleoside 5'-triphosphate = RNA(n+1) + diphosphate. Its function is as follows. Promotes RNA polymerase assembly. Latches the N- and C-terminal regions of the beta' subunit thereby facilitating its interaction with the beta and alpha subunits. The chain is DNA-directed RNA polymerase subunit omega (rpoZ) from Xylella fastidiosa (strain 9a5c).